A 114-amino-acid polypeptide reads, in one-letter code: Histone H3-6 (114 aa).

A compositionally biased stretch (basic residues) spans 1–17 (NTGGKAPRKHIAHKQAK). The tract at residues 1 to 32 (NTGGKAPRKHIAHKQAKKSSAAAATGGVKKPH) is disordered. Positions 18–28 (KSSAAAATGGV) are enriched in low complexity.

Belongs to the histone H3 family. As to quaternary structure, the nucleosome is a histone octamer containing two molecules each of H2A, H2B, H3 and H4 assembled in one H3-H4 heterotetramer and two H2A-H2B heterodimers. The octamer wraps approximately 147 bp of DNA.

It is found in the nucleus. Its subcellular location is the chromosome. In terms of biological role, core component of nucleosome. Nucleosomes wrap and compact DNA into chromatin, limiting DNA accessibility to the cellular machineries which require DNA as a template. Histones thereby play a central role in transcription regulation, DNA repair, DNA replication and chromosomal stability. DNA accessibility is regulated via a complex set of post-translational modifications of histones, also called histone code, and nucleosome remodeling. The polypeptide is Histone H3-6 (H3-6) (Stylonychia lemnae (Ciliate)).